A 154-amino-acid polypeptide reads, in one-letter code: Prefoldin subunit 2 (154 aa).

Over residues 124–139 (IRLMGEDEKPAAKENS) the composition is skewed to basic and acidic residues. Residues 124-154 (IRLMGEDEKPAAKENSEGAGAKASSAGVLVS) are disordered. Over residues 140–154 (EGAGAKASSAGVLVS) the composition is skewed to low complexity.

It belongs to the prefoldin subunit beta family. In terms of assembly, heterohexamer of two PFD-alpha type and four PFD-beta type subunits. Component of the PAQosome complex which is responsible for the biogenesis of several protein complexes and which consists of R2TP complex members RUVBL1, RUVBL2, RPAP3 and PIH1D1, URI complex members PFDN2, PFDN6, PDRG1, UXT and URI1 as well as ASDURF, POLR2E and DNAAF10/WDR92. Interacts with URI1; the interaction is phosphorylation-dependent and occurs in a growth-dependent manner.

The protein resides in the nucleus. It is found in the cytoplasm. It localises to the mitochondrion. Functionally, binds specifically to cytosolic chaperonin (c-CPN) and transfers target proteins to it. Binds to nascent polypeptide chain and promotes folding in an environment in which there are many competing pathways for nonnative proteins. In Homo sapiens (Human), this protein is Prefoldin subunit 2 (PFDN2).